Reading from the N-terminus, the 79-residue chain is Calcium/calmodulin-dependent protein kinase II inhibitor 2 (79 aa).

A disordered region spans residues 1–21; sequence MSEILPYSEDKMGRFGADPEG. Positions 43-69 are inhibitory domain; sequence KRPPKLGQIGRAKRVVIEDDRIDDVLK.

This sequence belongs to the CAMK2N family. Interacts with CAMK2A and CAMK2B in the presence of Ca(2+)/calmodulin or after autophosphorylation.

It is found in the nucleus. Its subcellular location is the cytoplasm. The protein localises to the cytosol. The protein resides in the synapse. Potent and specific cellular inhibitor of CaM-kinase II (CAMK2). Traps Ca(2+)/calmodulin on CAMK2. In Bos taurus (Bovine), this protein is Calcium/calmodulin-dependent protein kinase II inhibitor 2 (CAMK2N2).